The sequence spans 474 residues: Dipeptidase A (474 aa).

Cysteine 6 is a catalytic residue.

Belongs to the peptidase C69 family. In terms of assembly, homooctamer.

It catalyses the reaction an L-aminoacyl-L-amino acid + H2O = 2 an L-alpha-amino acid. With respect to regulation, inhibited by Zn(2+), Cu(2+), Ca(2+) and Cd(2+). Functionally, hydrolyzes a wide range of dipeptides but unable to hydrolyze dipeptides containing proline. Highest activity against Met-Ala. This is Dipeptidase A (pepDA) from Lactobacillus helveticus (Lactobacillus suntoryeus).